The following is a 392-amino-acid chain: Probable protein phosphatase 2C 78 (392 aa).

The PPM-type phosphatase domain occupies 39 to 342 (ASGEYSIAVA…DDITVVVVYL (304 aa)). 4 residues coordinate Mn(2+): Asp73, Gly74, Asp274, and Asp333.

It belongs to the PP2C family. Mg(2+) is required as a cofactor. Requires Mn(2+) as cofactor.

It carries out the reaction O-phospho-L-seryl-[protein] + H2O = L-seryl-[protein] + phosphate. The catalysed reaction is O-phospho-L-threonyl-[protein] + H2O = L-threonyl-[protein] + phosphate. The chain is Probable protein phosphatase 2C 78 from Oryza sativa subsp. japonica (Rice).